Consider the following 130-residue polypeptide: Serum amyloid A-4 protein (130 aa).

An N-terminal signal peptide occupies residues 1–18 (MRLFTGIVFCSLVMGVTS). Residue Asn-94 is glycosylated (N-linked (GlcNAc...) asparagine; partial). Residues 101–130 (DSKSNEKAEEWGRSGKDPDRFRPDGLPKKY) are disordered.

This sequence belongs to the SAA family. Apolipoprotein of the HDL complex. In terms of tissue distribution, expressed by the liver; secreted in plasma.

The protein resides in the secreted. In terms of biological role, major acute phase reactant. This is Serum amyloid A-4 protein from Homo sapiens (Human).